Reading from the N-terminus, the 524-residue chain is Chromosomal replication initiator protein DnaA (524 aa).

The segment at 1 to 105 (MSQNSSSLLE…EQEIPETPAQ (105 aa)) is domain I, interacts with DnaA modulators. Residues 95 to 183 (PEQEIPETPA…PAHNPNREVS (89 aa)) are disordered. Residues 106-182 (QEFKYQPDAP…TPAHNPNREV (77 aa)) are domain II. The span at 148-158 (APEPHPAPIAD) shows a compositional bias: pro residues. The segment at 183–399 (SLNPKYTFES…GALIRVSAYS (217 aa)) is domain III, AAA+ region. Residues Gly227, Gly229, Lys230, and Thr231 each coordinate ATP. Positions 400–524 (SLINQPIDKE…TQLIKSRGRN (125 aa)) are domain IV, binds dsDNA.

Belongs to the DnaA family. Oligomerizes as a right-handed, spiral filament on DNA at oriC.

Its subcellular location is the cytoplasm. Functionally, plays an essential role in the initiation and regulation of chromosomal replication. ATP-DnaA binds to the origin of replication (oriC) to initiate formation of the DNA replication initiation complex once per cell cycle. Binds the DnaA box (a 9 base pair repeat at the origin) and separates the double-stranded (ds)DNA. Forms a right-handed helical filament on oriC DNA; dsDNA binds to the exterior of the filament while single-stranded (ss)DNA is stabiized in the filament's interior. The ATP-DnaA-oriC complex binds and stabilizes one strand of the AT-rich DNA unwinding element (DUE), permitting loading of DNA polymerase. After initiation quickly degrades to an ADP-DnaA complex that is not apt for DNA replication. Binds acidic phospholipids. The protein is Chromosomal replication initiator protein DnaA of Corynebacterium glutamicum (strain R).